The following is a 4499-amino-acid chain: Dynein alpha chain, flagellar outer arm (4499 aa).

Residues 1 to 1677 (MSIFWEVPNA…RIRICDASFP (1677 aa)) are stem. 6 Kelch repeats span residues 29-84 (RFVL…ALDD), 86-135 (RLLV…RFGS), 137-183 (VFIF…RFDH), 199-245 (KLLI…VCDG), 253-304 (KVFS…FDVK), and 307-358 (SLLI…IRGL). The stretch at 425 to 534 (FANTAARNCI…IRGSPFTVKC (110 aa)) is one Filamin repeat. Kelch repeat units lie at residues 562 to 608 (ELVL…VLSD) and 610 to 661 (ELVV…AVSA). The interval 653 to 720 (PKGAAAVSAE…SRPVSAKPAP (68 aa)) is disordered. Residues 655 to 689 (GAAAVSAEPSAEPAAEPAAEPAAEPDADAPAAEPA) show a composition bias toward low complexity. A compositionally biased stretch (acidic residues) spans 690–705 (AEGEEGAVPAEGEEGA). 2 Kelch repeats span residues 750–801 (LYVM…ATGN) and 864–913 (KLFL…TLSG). 2 coiled-coil regions span residues 1261–1334 (ELHK…MIAN) and 1382–1450 (KKEL…RRAF). AAA regions lie at residues 1678–1921 (YGYE…VLVV) and 1981–2225 (DVIV…KSYS). Residues 1716-1723 (GPAGTGKT) and 2019-2026 (GPTGTGRT) contribute to the ATP site. One copy of the Kelch 11 repeat lies at 2269-2317 (MIWAFGGGLVEKDGIPYRRNFDKWFKQTWTTVKIPGKGTVYDYFVNPKT). AAA stretches follow at residues 2331-2577 (DYDG…VFQG) and 2679-2928 (EYNE…ERRY). 2369-2376 (GGAGVGKT) is an ATP binding site. Residues 2655–2688 (LADKAYDEVADYTSLYKTLTEALNEYNETNAAMD) are a coiled coil. 2717 to 2724 (GVGGSGKQ) serves as a coordination point for ATP. A coiled-coil region spans residues 3003-3023 (VGVEKEKVNAENAAAQVEAEK). The tract at residues 3003–3262 (VGVEKEKVNA…ERWALTVEQL (260 aa)) is stalk. One copy of the Kelch 12 repeat lies at 3070–3117 (LKKPPPGVDDITAVVIILLENNPKDKSWQAAQKLMNNVDKFLERVKSF). Coiled-coil stretches lie at residues 3170–3262 (DVVQ…VEQL) and 3486–3515 (NKER…ELED). The tract at residues 3320–3550 (LVDDALVAGW…AKRVSTEISE (231 aa)) is AAA 5. Residues 3614–3687 (GRKKGKGLKK…VGDAEDEDDE (74 aa)) are disordered. The segment covering 3630-3653 (QPMDHQSLMEKARRSSGVGDRRPS) has biased composition (basic and acidic residues). Positions 3843-4082 (LQNFCEHMMG…LTTCGDVLYN (240 aa)) are AAA 6.

It belongs to the dynein heavy chain family. Consists of at least 3 heavy chains (alpha, beta and gamma), 2 intermediate chains and 8 light chains.

It is found in the cell projection. The protein resides in the cilium. It localises to the flagellum. The protein localises to the cytoplasm. Its subcellular location is the cytoskeleton. It is found in the flagellum axoneme. In terms of biological role, force generating protein of eukaryotic cilia and flagella. Produces force towards the minus ends of microtubules. Dynein has ATPase activity; the force-producing power stroke is thought to occur on release of ADP. This Chlamydomonas reinhardtii (Chlamydomonas smithii) protein is Dynein alpha chain, flagellar outer arm (ODA11).